A 320-amino-acid polypeptide reads, in one-letter code: Fe-S cluster assembly protein dre2 (320 aa).

The interval 1-130 (MAKQTLLLSP…KPDIEEMQAV (130 aa)) is N-terminal SAM-like domain. A linker region spans residues 131 to 213 (PLRLGRKNDH…DNLLDDSELS (83 aa)). Positions 141–166 (LAGAPSLEGSAAEHPFPPEVSEGKTA) are disordered. 4 residues coordinate [2Fe-2S] cluster: Cys-222, Cys-233, Cys-236, and Cys-238. A fe-S binding site A region spans residues 222–238 (CRPKAGKRRRACKDCTC). [4Fe-4S] cluster is bound by residues Cys-283, Cys-286, Cys-294, and Cys-297. 2 consecutive short sequence motifs (cx2C motif) follow at residues 283-286 (CGNC) and 294-297 (CEGC). Residues 283-297 (CGNCSLGDAFRCEGC) are fe-S binding site B.

The protein belongs to the anamorsin family. As to quaternary structure, monomer. Interacts with tah18. Interacts with mia40. [2Fe-2S] cluster serves as cofactor. It depends on [4Fe-4S] cluster as a cofactor.

The protein localises to the cytoplasm. Its subcellular location is the mitochondrion intermembrane space. In terms of biological role, component of the cytosolic iron-sulfur (Fe-S) protein assembly (CIA) machinery required for the maturation of extramitochondrial Fe-S proteins. Part of an electron transfer chain functioning in an early step of cytosolic Fe-S biogenesis, facilitating the de novo assembly of a [4Fe-4S] cluster on the scaffold complex cfd1-nbp35. Electrons are transferred to dre2 from NADPH via the FAD- and FMN-containing protein tah18. Tah18-dre2 are also required for the assembly of the diferric tyrosyl radical cofactor of ribonucleotide reductase (RNR), probably by providing electrons for reduction during radical cofactor maturation in the catalytic small subunit rnr2. This is Fe-S cluster assembly protein dre2 from Neosartorya fischeri (strain ATCC 1020 / DSM 3700 / CBS 544.65 / FGSC A1164 / JCM 1740 / NRRL 181 / WB 181) (Aspergillus fischerianus).